Here is a 498-residue protein sequence, read N- to C-terminus: ATP synthase subunit beta, chloroplastic (498 aa).

172–179 contributes to the ATP binding site; it reads GGAGVGKT.

This sequence belongs to the ATPase alpha/beta chains family. F-type ATPases have 2 components, CF(1) - the catalytic core - and CF(0) - the membrane proton channel. CF(1) has five subunits: alpha(3), beta(3), gamma(1), delta(1), epsilon(1). CF(0) has four main subunits: a(1), b(1), b'(1) and c(9-12).

It localises to the plastid. It is found in the chloroplast thylakoid membrane. It catalyses the reaction ATP + H2O + 4 H(+)(in) = ADP + phosphate + 5 H(+)(out). Functionally, produces ATP from ADP in the presence of a proton gradient across the membrane. The catalytic sites are hosted primarily by the beta subunits. The sequence is that of ATP synthase subunit beta, chloroplastic from Nicotiana tabacum (Common tobacco).